Reading from the N-terminus, the 177-residue chain is CCHC-type zinc finger nucleic acid binding protein (177 aa).

Ser2 is modified (N-acetylserine). The segment at 4-21 adopts a CCHC-type 1 zinc-finger fold; sequence NECFKCGRSGHWARECPT. Residue Lys8 is modified to N6-acetyllysine. 2 positions are modified to omega-N-methylarginine; by PRMT1: Arg25 and Arg27. The segment at 25–38 is RNA-binding Arg/Gly-rich region (RGG-box); it reads RGRGMRSRGRGGFT. An omega-N-methylarginine mark is found at Arg32 and Arg34. Ser49 bears the Phosphoserine mark. 6 CCHC-type zinc fingers span residues 52-69, 72-89, 96-113, 117-134, 135-152, and 156-173; these read DICY…DCDL, DACY…DCKE, QCCY…DCDH, QKCY…DCTK, VKCY…NCSK, and VNCY…ECTI. Omega-N-methylarginine occurs at positions 73, 79, and 80.

Associates with the 40S ribosomal subunit, the 80S ribosome and with polysomes. In terms of processing, arginine methylation by PRMT1 in the Arg/Gly-rich region impedes RNA binding. As to expression, expressed in the liver, kidney, spleen, testis, lung, muscle and adrenal glands.

It localises to the nucleus. It is found in the cytoplasm. Its subcellular location is the endoplasmic reticulum. In terms of biological role, single-stranded DNA-binding protein that preferentially binds to the sterol regulatory element (SRE) sequence 5'-GTGCGGTG-3', and thereby mediates transcriptional repression. Has a role as transactivator of the Myc promoter. Binds single-stranded RNA in a sequence-specific manner. Binds G-rich elements in target mRNA coding sequences. Prevents G-quadruplex structure formation in vitro, suggesting a role in supporting translation by resolving stable structures on mRNAs. Its function is as follows. Binds to RNA. In Homo sapiens (Human), this protein is CCHC-type zinc finger nucleic acid binding protein.